Reading from the N-terminus, the 332-residue chain is Methionine synthase (332 aa).

Zn(2+)-binding residues include His-211, Cys-213, and Cys-296.

This sequence belongs to the archaeal MetE family. It depends on Zn(2+) as a cofactor.

It participates in amino-acid biosynthesis; L-methionine biosynthesis via de novo pathway. Its function is as follows. Catalyzes the transfer of a methyl group to L-homocysteine resulting in methionine formation. The physiological methyl donor is unknown. The polypeptide is Methionine synthase (Saccharolobus solfataricus (strain ATCC 35092 / DSM 1617 / JCM 11322 / P2) (Sulfolobus solfataricus)).